A 235-amino-acid chain; its full sequence is 7-cyano-7-deazaguanine synthase (235 aa).

Phe9–Leu19 lines the ATP pocket. Residues Cys197, Cys212, Cys215, and Cys218 each coordinate Zn(2+).

It belongs to the QueC family. Zn(2+) is required as a cofactor.

It catalyses the reaction 7-carboxy-7-deazaguanine + NH4(+) + ATP = 7-cyano-7-deazaguanine + ADP + phosphate + H2O + H(+). It participates in purine metabolism; 7-cyano-7-deazaguanine biosynthesis. Catalyzes the ATP-dependent conversion of 7-carboxy-7-deazaguanine (CDG) to 7-cyano-7-deazaguanine (preQ(0)). This chain is 7-cyano-7-deazaguanine synthase, found in Polaromonas sp. (strain JS666 / ATCC BAA-500).